Reading from the N-terminus, the 302-residue chain is Endochitinase 2 (302 aa).

One can recognise a Chitin-binding type-1 domain in the interval 1–42 (EQCGRQAGGALCPGGLCCSQFGWCGSTADYCTVPGCQSQCSG). 7 disulfide bridges follow: Cys-3/Cys-18, Cys-12/Cys-24, Cys-17/Cys-31, Cys-36/Cys-40, Cys-73/Cys-136, Cys-148/Cys-156, and Cys-255/Cys-287. The Proton donor role is filled by Glu-117. The propeptide at 296-302 (GVSVDSM) is removed in mature form.

Belongs to the glycosyl hydrolase 19 family. Chitinase class I subfamily.

The catalysed reaction is Random endo-hydrolysis of N-acetyl-beta-D-glucosaminide (1-&gt;4)-beta-linkages in chitin and chitodextrins.. Its function is as follows. Defense against chitin-containing fungal pathogens. The sequence is that of Endochitinase 2 from Gossypium hirsutum (Upland cotton).